The primary structure comprises 744 residues: Adenosylcobalamin-dependent ribonucleoside-triphosphate reductase (744 aa).

A disulfide bond links Cys120 and Cys424. An effector region-1 region spans residues 148–159 (SMPFSFLFDQLM). The tract at residues 169 to 318 (VDENINQIPK…ICNLIGKTVV (150 aa)) is effector region-2. Active-site residues include Cys413 and Glu415. An adenosylcobalamin-binding-1 region spans residues 570 to 631 (FHYSGYLIQR…SDNFASAGTV (62 aa)). The adenosylcobalamin-binding-2 stretch occupies residues 690–729 (LKQAPKEPISKEKYEKADNHITGNVEIVFEQTNEDQKGLE).

Belongs to the class II ribonucleoside-triphosphate reductase family. As to quaternary structure, monomer. Adenosylcob(III)alamin is required as a cofactor.

The catalysed reaction is a 2'-deoxyribonucleoside 5'-triphosphate + [thioredoxin]-disulfide + H2O = a ribonucleoside 5'-triphosphate + [thioredoxin]-dithiol. With respect to regulation, allosterically regulated by ATP and dNTP. This is Adenosylcobalamin-dependent ribonucleoside-triphosphate reductase (rtpR) from Lactobacillus gasseri (strain ATCC 33323 / DSM 20243 / BCRC 14619 / CIP 102991 / JCM 1131 / KCTC 3163 / NCIMB 11718 / NCTC 13722 / AM63).